The primary structure comprises 324 residues: Glyoxylate/hydroxypyruvate reductase B (324 aa).

Residues Arg-237 and Glu-266 contribute to the active site. His-285 functions as the Proton donor in the catalytic mechanism.

It belongs to the D-isomer specific 2-hydroxyacid dehydrogenase family. GhrB subfamily. In terms of assembly, homodimer.

Its subcellular location is the cytoplasm. It catalyses the reaction glycolate + NADP(+) = glyoxylate + NADPH + H(+). The catalysed reaction is (R)-glycerate + NAD(+) = 3-hydroxypyruvate + NADH + H(+). It carries out the reaction (R)-glycerate + NADP(+) = 3-hydroxypyruvate + NADPH + H(+). Its function is as follows. Catalyzes the NADPH-dependent reduction of glyoxylate and hydroxypyruvate into glycolate and glycerate, respectively. This Enterobacter sp. (strain 638) protein is Glyoxylate/hydroxypyruvate reductase B.